The sequence spans 147 residues: Phospholipase A2 SSD1043 (147 aa).

An N-terminal signal peptide occupies residues 1 to 22 (MSPKFMFFSIIAVWSCAAVTEA). Residues 23–28 (LFIQHR) constitute a propeptide that is removed on maturation. Cystine bridges form between Cys-55–Cys-71, Cys-70–Cys-130, Cys-77–Cys-123, Cys-86–Cys-116, and Cys-109–Cys-121. Gly-56 and Gly-58 together coordinate Ca(2+). His-74 is an active-site residue. Asp-75 contributes to the Ca(2+) binding site. Asp-124 is an active-site residue.

Requires Ca(2+) as cofactor. Expressed by the venom gland.

It localises to the secreted. It carries out the reaction a 1,2-diacyl-sn-glycero-3-phosphocholine + H2O = a 1-acyl-sn-glycero-3-phosphocholine + a fatty acid + H(+). Functionally, PLA2 catalyzes the calcium-dependent hydrolysis of the 2-acyl groups in 3-sn-phosphoglycerides. The polypeptide is Phospholipase A2 SSD1043 (Scolopendra dehaani (Thai centipede)).